The primary structure comprises 197 residues: Large ribosomal subunit protein uL11 (197 aa).

Belongs to the universal ribosomal protein uL11 family. In terms of assembly, part of the ribosomal stalk of the 50S ribosomal subunit. Interacts with L10 and the large rRNA to form the base of the stalk. L10 forms an elongated spine to which L12 dimers bind in a sequential fashion forming a multimeric L10(L12)X complex. Post-translationally, one or more lysine residues are methylated.

Its function is as follows. Forms part of the ribosomal stalk which helps the ribosome interact with GTP-bound translation factors. The chain is Large ribosomal subunit protein uL11 from Mycoplasmopsis pulmonis (strain UAB CTIP) (Mycoplasma pulmonis).